We begin with the raw amino-acid sequence, 22 residues long: Superoxide dismutase [Cu-Zn] 2 (22 aa).

This sequence belongs to the Cu-Zn superoxide dismutase family. In terms of assembly, homodimer. Requires Cu cation as cofactor. The cofactor is Zn(2+). Dominant isozyme in roots.

It localises to the cytoplasm. It carries out the reaction 2 superoxide + 2 H(+) = H2O2 + O2. In terms of biological role, destroys radicals which are normally produced within the cells and which are toxic to biological systems. In Picea abies (Norway spruce), this protein is Superoxide dismutase [Cu-Zn] 2.